Here is a 645-residue protein sequence, read N- to C-terminus: Sodium/hydrogen exchanger 9 (645 aa).

At 1-20 the chain is on the lumenal side; the sequence is MERQSRVMSEKDEYQFQHQG. The chain crosses the membrane as a helical span at residues 21-41; the sequence is AVELLVFNFLLILTILTIWLF. Residues 42–45 lie on the Cytoplasmic side of the membrane; it reads KNHR. Residues 46-66 traverse the membrane as a helical segment; sequence FRFLHETGGAMVYGLIMGLIL. Residues 67–126 lie on the Lumenal side of the membrane; sequence RYATAPTDIESGTVYDCVKLTFSPSTLLVNITDQVYEYKYKREISQHNINPHQGNAILEK. A glycan (N-linked (GlcNAc...) asparagine) is linked at Asn-96. The chain crosses the membrane as a helical span at residues 127–147; that stretch reads MTFDPEIFFNVLLPPIIFHAG. The Cytoplasmic segment spans residues 148–164; that stretch reads YSLKKRHFFQNLGSILT. Residues 165-185 form a helical membrane-spanning segment; it reads YAFLGTAISCIVIGLIMYGFV. Topologically, residues 186 to 203 are lumenal; the sequence is KAMIHAGQLKNGDFHFTD. Residues 204–224 traverse the membrane as a helical segment; that stretch reads CLFFGSLMSATDPVTVLAIFH. At 225–235 the chain is on the cytoplasmic side; the sequence is ELHVDPDLYTL. Residues 236–256 form a helical membrane-spanning segment; it reads LFGESVLNDAVAIVLTYSISI. At 257–277 the chain is on the lumenal side; it reads YSPKENPNAFDAAAFFQSVGN. A helical membrane pass occupies residues 278-298; the sequence is FLGIFAGSFAMGSAYAIITAL. At 299–301 the chain is on the cytoplasmic side; it reads LTK. Helical transmembrane passes span 302 to 322 and 323 to 343; these read FTKL…LSWS and AFLS…FCGV. The Cytoplasmic segment spans residues 344–364; sequence TQAHYTYNNLSSDSKIRTKQL. Residues 365 to 385 traverse the membrane as a helical segment; sequence FEFMNFLAENVIFCYMGLALF. A topological domain (lumenal) is located at residue Thr-386. Residues 387–407 form a helical membrane-spanning segment; the sequence is FQNHIFNALFILGAFLAIFVA. Residues 408–429 are Cytoplasmic-facing; it reads RACNIYPLSFLLNLGRKQKIPW. A helical transmembrane segment spans residues 430–450; the sequence is NFQHMMMFSGLRGAIAFALAI. Residues 451–465 lie on the Lumenal side of the membrane; sequence RNTESQPKQMMFTTT. The helical transmembrane segment at 466–486 threads the bilayer; that stretch reads LLLVFFTVWVFGGGTTPMLTW. The Cytoplasmic segment spans residues 487 to 645; sequence LQIRVGVDLD…EQTLGQSQLN (159 aa). The disordered stretch occupies residues 594 to 622; sequence QASSPCSPPARLGLDQKASPQTPGKENIY.

The protein belongs to the monovalent cation:proton antiporter 1 (CPA1) transporter (TC 2.A.36) family. In terms of assembly, homodimer; phosphatidylinositol-4,5-bisphosphate (PIP2) and phosphatidylinositol 3,4,5-trisphosphate (PIP3) could be involved in the dimer stabilization. Interacts (via the C-terminus) with RACK1. Interacts with CHP1. In terms of tissue distribution, ubiquitously expressed in all tissues tested. Expressed at highest levels in heart and skeletal muscle, followed by placenta, kidney, and liver. Expressed in the brain, in the medulla and spinal cord.

It is found in the late endosome membrane. It localises to the early endosome membrane. The protein resides in the recycling endosome membrane. The protein localises to the cell membrane. Its subcellular location is the cytoplasmic vesicle. It is found in the phagosome membrane. The catalysed reaction is Na(+)(in) + H(+)(out) = Na(+)(out) + H(+)(in). It carries out the reaction K(+)(in) + H(+)(out) = K(+)(out) + H(+)(in). Functionally, endosomal Na(+), K(+)/H(+) antiporter. Mediates the electroneutral exchange of endosomal luminal H(+) for a cytosolic Na(+) or K(+). By facilitating proton efflux, SLC9A9 counteracts the acidity generated by vacuolar (V)-ATPase, thereby limiting luminal acidification. Regulates organellar pH and consequently, e.g., endosome maturation and endocytic trafficking of plasma membrane receptors and neurotransporters. Promotes the recycling of transferrin receptors back to the cell surface to facilitate additional iron uptake in the brain. Regulates synaptic transmission by regulating the luminal pH of axonal endosomes. Regulates phagosome lumenal pH, thus affecting phagosome maturation, and consequently, microbicidal activity in macrophages. Can also be active at the cell surface of specialized cells, e.g., in the inner ear hair bundles uses the high K(+) of the endolymph to regulate intracelular pH. The polypeptide is Sodium/hydrogen exchanger 9 (Homo sapiens (Human)).